Consider the following 109-residue polypeptide: UPF0060 membrane protein PA14_21660 (109 aa).

4 consecutive transmembrane segments (helical) span residues 5–25 (LWFV…YLWL), 27–47 (LGKS…FALL), 59–79 (AYAA…AFVE), and 84–104 (LWSD…VLFG).

It belongs to the UPF0060 family.

The protein localises to the cell inner membrane. In Pseudomonas aeruginosa (strain UCBPP-PA14), this protein is UPF0060 membrane protein PA14_21660.